The sequence spans 278 residues: Urease accessory protein UreD (278 aa).

This sequence belongs to the UreD family. In terms of assembly, ureD, UreF and UreG form a complex that acts as a GTP-hydrolysis-dependent molecular chaperone, activating the urease apoprotein by helping to assemble the nickel containing metallocenter of UreC. The UreE protein probably delivers the nickel.

It localises to the cytoplasm. Its function is as follows. Required for maturation of urease via the functional incorporation of the urease nickel metallocenter. In Leptothrix cholodnii (strain ATCC 51168 / LMG 8142 / SP-6) (Leptothrix discophora (strain SP-6)), this protein is Urease accessory protein UreD.